The following is a 728-amino-acid chain: Catalase-peroxidase 1 (728 aa).

A cross-link (tryptophyl-tyrosyl-methioninium (Trp-Tyr) (with M-244)) is located at residues 91–218; the sequence is WHSAGTYRTA…LAAVQMGLIY (128 aa). His92 (proton acceptor) is an active-site residue. Positions 218 to 244 form a cross-link, tryptophyl-tyrosyl-methioninium (Tyr-Met) (with W-91); it reads YVNPEGPDGNPDPVAAAHDIRETFARM. His259 is a binding site for heme b.

Belongs to the peroxidase family. Peroxidase/catalase subfamily. Homodimer or homotetramer. Heme b serves as cofactor. Formation of the three residue Trp-Tyr-Met cross-link is important for the catalase, but not the peroxidase activity of the enzyme.

It carries out the reaction H2O2 + AH2 = A + 2 H2O. The catalysed reaction is 2 H2O2 = O2 + 2 H2O. Bifunctional enzyme with both catalase and broad-spectrum peroxidase activity. This chain is Catalase-peroxidase 1, found in Burkholderia orbicola (strain MC0-3).